The following is a 200-amino-acid chain: HTH-type transcriptional regulator Hpr (200 aa).

One can recognise an HTH marR-type domain in the interval 13 to 157 (AMLFSQRIAQ…MMCIVRNIYG (145 aa)). Positions 63–86 (ISEIAKFGVMHVSTAFNFSKKLEE) form a DNA-binding region, H-T-H motif.

As to quaternary structure, homodimer.

Negative regulator of protease production and sporulation. This chain is HTH-type transcriptional regulator Hpr, found in Geobacillus thermodenitrificans (strain NG80-2).